Consider the following 169-residue polypeptide: Capsid protein (169 aa).

Belongs to the nanoviridae capsid protein family.

It localises to the virion. In Subterranean clover stunt virus (strain F) (SCSV), this protein is Capsid protein (DNA-S).